The sequence spans 91 residues: Large ribosomal subunit protein bL27 (91 aa).

The disordered stretch occupies residues 1 to 24 (MAHKKGVGSSRNGRDSNPKMRGVK).

Belongs to the bacterial ribosomal protein bL27 family.

The protein is Large ribosomal subunit protein bL27 of Chloroflexus aggregans (strain MD-66 / DSM 9485).